A 333-amino-acid polypeptide reads, in one-letter code: Adenosine deaminase (333 aa).

The Zn(2+) site is built by histidine 12 and histidine 14. Histidine 14, aspartate 16, and glycine 170 together coordinate substrate. Histidine 197 contacts Zn(2+). Glutamate 200 acts as the Proton donor in catalysis. Aspartate 278 serves as a coordination point for Zn(2+). Aspartate 279 lines the substrate pocket.

It belongs to the metallo-dependent hydrolases superfamily. Adenosine and AMP deaminases family. Adenosine deaminase subfamily. The cofactor is Zn(2+).

It carries out the reaction adenosine + H2O + H(+) = inosine + NH4(+). The catalysed reaction is 2'-deoxyadenosine + H2O + H(+) = 2'-deoxyinosine + NH4(+). Its function is as follows. Catalyzes the hydrolytic deamination of adenosine and 2-deoxyadenosine. This chain is Adenosine deaminase, found in Klebsiella pneumoniae (strain 342).